Reading from the N-terminus, the 124-residue chain is Small ribosomal subunit protein uS12 (124 aa).

A disordered region spans residues 1–42 (MPTIQQLVRKGRRPKVNKTKSPALRGNPQQRGVCSRVYTTTP). A compositionally biased stretch (basic residues) spans 9 to 18 (RKGRRPKVNK). The span at 27–42 (NPQQRGVCSRVYTTTP) shows a compositional bias: polar residues. Asp-89 is modified (3-methylthioaspartic acid).

The protein belongs to the universal ribosomal protein uS12 family. As to quaternary structure, part of the 30S ribosomal subunit. Contacts proteins S8 and S17. May interact with IF1 in the 30S initiation complex.

In terms of biological role, with S4 and S5 plays an important role in translational accuracy. Functionally, interacts with and stabilizes bases of the 16S rRNA that are involved in tRNA selection in the A site and with the mRNA backbone. Located at the interface of the 30S and 50S subunits, it traverses the body of the 30S subunit contacting proteins on the other side and probably holding the rRNA structure together. The combined cluster of proteins S8, S12 and S17 appears to hold together the shoulder and platform of the 30S subunit. The sequence is that of Small ribosomal subunit protein uS12 from Tropheryma whipplei (strain TW08/27) (Whipple's bacillus).